A 198-amino-acid chain; its full sequence is Glycerol-3-phosphate acyltransferase (198 aa).

The next 5 membrane-spanning stretches (helical) occupy residues 4–24 (LALIMIIIAYLLGSISSAVLI), 53–75 (SAAGLVLLCDILKGMLPVWGGYF), 80–102 (PFMLGIIAISACLGHMYPLFFHF), 112–132 (LGALAPIGLDLTGMLFGCWVV), and 134–154 (VLVTGYSSLASMITALLAPLF).

It belongs to the PlsY family. Probably interacts with PlsX.

The protein resides in the cell inner membrane. The enzyme catalyses an acyl phosphate + sn-glycerol 3-phosphate = a 1-acyl-sn-glycero-3-phosphate + phosphate. It functions in the pathway lipid metabolism; phospholipid metabolism. Its function is as follows. Catalyzes the transfer of an acyl group from acyl-phosphate (acyl-PO(4)) to glycerol-3-phosphate (G3P) to form lysophosphatidic acid (LPA). This enzyme utilizes acyl-phosphate as fatty acyl donor, but not acyl-CoA or acyl-ACP. The sequence is that of Glycerol-3-phosphate acyltransferase from Aliivibrio fischeri (strain ATCC 700601 / ES114) (Vibrio fischeri).